Consider the following 761-residue polypeptide: Phosphoribosylformylglycinamidine synthase subunit PurL (761 aa).

Over residues 1–16 (MTGNPAAPAATSVSPP) the composition is skewed to low complexity. The tract at residues 1–21 (MTGNPAAPAATSVSPPAEQPY) is disordered. His-57 is a catalytic residue. Residues Tyr-60 and Lys-101 each contribute to the ATP site. Residue Glu-103 coordinates Mg(2+). Substrate is bound by residues 104–107 (SHNH) and Arg-126. His-105 acts as the Proton acceptor in catalysis. Asp-127 contributes to the Mg(2+) binding site. Gln-252 serves as a coordination point for substrate. Asp-280 contributes to the Mg(2+) binding site. 329-331 (ESQ) is a binding site for substrate. The ATP site is built by Asn-519 and Gly-556. Residue Asn-557 coordinates Mg(2+). Ser-559 is a binding site for substrate.

The protein belongs to the FGAMS family. As to quaternary structure, monomer. Part of the FGAM synthase complex composed of 1 PurL, 1 PurQ and 2 PurS subunits.

The protein localises to the cytoplasm. It carries out the reaction N(2)-formyl-N(1)-(5-phospho-beta-D-ribosyl)glycinamide + L-glutamine + ATP + H2O = 2-formamido-N(1)-(5-O-phospho-beta-D-ribosyl)acetamidine + L-glutamate + ADP + phosphate + H(+). It participates in purine metabolism; IMP biosynthesis via de novo pathway; 5-amino-1-(5-phospho-D-ribosyl)imidazole from N(2)-formyl-N(1)-(5-phospho-D-ribosyl)glycinamide: step 1/2. Functionally, part of the phosphoribosylformylglycinamidine synthase complex involved in the purines biosynthetic pathway. Catalyzes the ATP-dependent conversion of formylglycinamide ribonucleotide (FGAR) and glutamine to yield formylglycinamidine ribonucleotide (FGAM) and glutamate. The FGAM synthase complex is composed of three subunits. PurQ produces an ammonia molecule by converting glutamine to glutamate. PurL transfers the ammonia molecule to FGAR to form FGAM in an ATP-dependent manner. PurS interacts with PurQ and PurL and is thought to assist in the transfer of the ammonia molecule from PurQ to PurL. The polypeptide is Phosphoribosylformylglycinamidine synthase subunit PurL (Frankia casuarinae (strain DSM 45818 / CECT 9043 / HFP020203 / CcI3)).